Consider the following 593-residue polypeptide: UvrABC system protein C (593 aa).

The GIY-YIG domain maps to 14-91 (DSPGCYLHKD…IQENMPKYNI (78 aa)). The region spanning 196 to 231 (NKIVNGLTEKMKSAAMTMEFERAAEYRDLIEAISLL) is the UVR domain.

It belongs to the UvrC family. In terms of assembly, interacts with UvrB in an incision complex.

The protein localises to the cytoplasm. Its function is as follows. The UvrABC repair system catalyzes the recognition and processing of DNA lesions. UvrC both incises the 5' and 3' sides of the lesion. The N-terminal half is responsible for the 3' incision and the C-terminal half is responsible for the 5' incision. The chain is UvrABC system protein C from Streptococcus agalactiae serotype III (strain NEM316).